The primary structure comprises 305 residues: Insulin-like growth factor-binding protein 2 (305 aa).

A signal peptide spans 1 to 34 (MLPRLGGPALPLLLPSLLLLLLLGAGGCGPGVRA). Positions 36–118 (VLFRCPPCTP…VTGAGTCEKR (83 aa)) constitute an IGFBP N-terminal domain. Cystine bridges form between Cys40–Cys68, Cys43–Cys70, Cys51–Cys71, Cys59–Cys74, Cys82–Cys95, Cys89–Cys115, Cys207–Cys241, Cys252–Cys263, and Cys265–Cys286. The 83-residue stretch at 204-286 (RTPCQQELDQ…APTIRGDPEC (83 aa)) folds into the Thyroglobulin type-1 domain. The Cell attachment site motif lies at 281-283 (RGD).

In terms of assembly, interacts with IGF1. Interacts with IGF2. Interacts (via RGD motif) with integrin alpha5/ITGA5; this interaction induces cell migration, adhesion or apoptosis according to the context. Interacts with PTPRB; this interaction leads to PTPRB dimerization and inactivation. Post-translationally, cleaved by MMP9 leading to release of free IGF2 from IGFBP2-IGF2 complex, which contributes to enhance the motility and the growth of astrocytes. In terms of processing, O-glycosylated. As to expression, highly expressed in adult liver, but also in kidney, lung, brain, spleen, testis and ovary.

The protein localises to the secreted. In terms of biological role, multifunctional protein that plays a critical role in regulating the availability of IGFs such as IGF1 and IGF2 to their receptors and thereby regulates IGF-mediated cellular processes including proliferation, differentiation, and apoptosis in a cell-type specific manner. Functions coordinately with receptor protein tyrosine phosphatase beta/PTPRB and the IGF1 receptor to regulate IGF1-mediated signaling by stimulating the phosphorylation of PTEN leading to its inactivation and AKT1 activation. Plays a positive role in cell migration via interaction with integrin alpha5/ITGA5 through an RGD motif. Additionally, interaction with ITGA5/ITGB1 enhances the adhesion of endothelial progenitor cells to endothelial cells. Upon mitochondrial damage, facilitates apoptosis with ITGA5 of podocytes, and then activates the phosphorylation of focal adhesion kinase (FAK)-mediated mitochondrial injury. The sequence is that of Insulin-like growth factor-binding protein 2 (Igfbp2) from Mus musculus (Mouse).